The sequence spans 372 residues: MTSIEPTHTGKKVIVGMSGGVDSSVSAYLLMQQGYQVEGLFMKNWEEDDNNEYCAAAEDLKDAQAVCDKLGIKLHTVNFAAEYWDNVFEYFLAEYKAGRTPNPDIMCNKEIKFKAFLEFADEILDADYIAMGHYVRRRDNTDGSTQMLRGVDGNKDQSYFLYTLSHEQVARSLFPVGELEKHEVREIAKEMGLITHDKKDSTGICFIGERKFTEFLGTYLPAQPGNIETPEGEVIGTHQGLMYHTLGQRKGLGIGGMKNSNDDPWYVVDKDLERNVLIVGQGGHHPRLMSTGMTVNQLHWVDRTGPIDGCHIAVKTRYRQQDVPCTLTYTDEHTLRVVFDEPVAAVTPGQSAVFYDGEVCLGGGIIDQLIRG.

Residues 16 to 23 and Met-42 each bind ATP; that span reads GMSGGVDS. The segment at 102–104 is interaction with target base in tRNA; that stretch reads NPD. The Nucleophile role is filled by Cys-107. Cys-107 and Cys-205 are oxidised to a cystine. Position 132 (Gly-132) interacts with ATP. The segment at 155–157 is interaction with tRNA; it reads KDQ. Cys-205 serves as the catalytic Cysteine persulfide intermediate. Residues 317-318 are interaction with tRNA; sequence RY.

It belongs to the MnmA/TRMU family.

Its subcellular location is the cytoplasm. The catalysed reaction is S-sulfanyl-L-cysteinyl-[protein] + uridine(34) in tRNA + AH2 + ATP = 2-thiouridine(34) in tRNA + L-cysteinyl-[protein] + A + AMP + diphosphate + H(+). In terms of biological role, catalyzes the 2-thiolation of uridine at the wobble position (U34) of tRNA, leading to the formation of s(2)U34. The chain is tRNA-specific 2-thiouridylase MnmA from Shewanella baltica (strain OS195).